A 623-amino-acid chain; its full sequence is Actin-related protein 8 (623 aa).

Residues 1 to 24 (MTQTDRDAENGRDREKDREKEQQR) show a composition bias toward basic and acidic residues. The segment at 1–29 (MTQTDRDAENGRDREKDREKEQQRGVKRP) is disordered. 283–286 (DVGD) serves as a coordination point for ATP. Positions 428–438 (TQSKQDQSSKA) are enriched in low complexity. Residues 428–458 (TQSKQDQSSKASADRKSFPKPSSFEGESSVC) are disordered.

It belongs to the actin family. ARP8 subfamily. As to quaternary structure, component of the chromatin remodeling INO80 complex; specifically part of a complex module associated with the DBINO domain of INO80. Exists as monomers and dimers, but the dimer is most probably the biologically relevant form required for stable interactions with histones that exploits the twofold symmetry of the nucleosome core.

The protein localises to the nucleus. It localises to the chromosome. In terms of biological role, plays an important role in the functional organization of mitotic chromosomes. Exhibits low basal ATPase activity, and unable to polymerize. Functionally, proposed core component of the chromatin remodeling INO80 complex which is involved in transcriptional regulation, DNA replication and probably DNA repair. Required for the recruitment of INO80 (and probably the INO80 complex) to sites of DNA damage Strongly prefer nucleosomes and H3-H4 tetramers over H2A-H2B dimers, suggesting it may act as a nucleosome recognition module within the complex. This Danio rerio (Zebrafish) protein is Actin-related protein 8 (actr8).